A 329-amino-acid chain; its full sequence is CDP-6-deoxy-L-threo-D-glycero-4-hexulose-3-dehydrase reductase (329 aa).

The 2Fe-2S ferredoxin-type domain maps to 2 to 93 (SLNVKLHPSG…ELDVNYYPEL (92 aa)). 4 residues coordinate [2Fe-2S] cluster: C37, C42, C45, and C75. Positions 98 to 197 (KKTYPCKLDS…EGPQGTFFVR (100 aa)) constitute an FAD-binding FR-type domain.

As to quaternary structure, monomer.

It participates in nucleotide-sugar biosynthesis; CDP-ascarylose biosynthesis. The protein operates within bacterial outer membrane biogenesis; lipopolysaccharide biosynthesis. Functionally, participates in the conversion of CDP-6-deoxy-D-glycero-L-threo-4-hexulose to 3,6-dideoxy-D-glycero-D-glycero-4-hexulose together with CDP-6-deoxy-D-glycero-L-threo-4-hexulose-3-dehydrase (E1) in two consecutive steps. The detailed mechanism of E3 is not yet resolved. The polypeptide is CDP-6-deoxy-L-threo-D-glycero-4-hexulose-3-dehydrase reductase (ascD) (Yersinia pestis).